Consider the following 230-residue polypeptide: Flagellar L-ring protein (230 aa).

The signal sequence occupies residues M1–S16. The N-palmitoyl cysteine moiety is linked to residue C17. C17 carries S-diacylglycerol cysteine lipidation.

This sequence belongs to the FlgH family. In terms of assembly, the basal body constitutes a major portion of the flagellar organelle and consists of four rings (L,P,S, and M) mounted on a central rod.

Its subcellular location is the cell outer membrane. It is found in the bacterial flagellum basal body. Assembles around the rod to form the L-ring and probably protects the motor/basal body from shearing forces during rotation. This Bartonella bacilliformis (strain ATCC 35685 / KC583 / Herrer 020/F12,63) protein is Flagellar L-ring protein.